A 473-amino-acid chain; its full sequence is Photosystem II CP43 reaction center protein (473 aa).

Positions 1–14 (MKILYSLRRFYHVE) are excised as a propeptide. T15 bears the N-acetylthreonine mark. Residue T15 is modified to Phosphothreonine. 5 helical membrane-spanning segments follow: residues 69–93 (LFEV…PHLA), 134–155 (LLGP…KDRN), 178–200 (KALY…RKIT), 255–275 (KPFA…LSYS), and 291–312 (WFNN…ASQA). A [CaMn4O5] cluster-binding site is contributed by E367. A helical transmembrane segment spans residues 447–471 (RARAAAAGFEKGIDRDLEPVLYMNP).

This sequence belongs to the PsbB/PsbC family. PsbC subfamily. As to quaternary structure, PSII is composed of 1 copy each of membrane proteins PsbA, PsbB, PsbC, PsbD, PsbE, PsbF, PsbH, PsbI, PsbJ, PsbK, PsbL, PsbM, PsbT, PsbX, PsbY, PsbZ, Psb30/Ycf12, at least 3 peripheral proteins of the oxygen-evolving complex and a large number of cofactors. It forms dimeric complexes. The cofactor is Binds multiple chlorophylls and provides some of the ligands for the Ca-4Mn-5O cluster of the oxygen-evolving complex. It may also provide a ligand for a Cl- that is required for oxygen evolution. PSII binds additional chlorophylls, carotenoids and specific lipids..

The protein resides in the plastid. It localises to the chloroplast thylakoid membrane. One of the components of the core complex of photosystem II (PSII). It binds chlorophyll and helps catalyze the primary light-induced photochemical processes of PSII. PSII is a light-driven water:plastoquinone oxidoreductase, using light energy to abstract electrons from H(2)O, generating O(2) and a proton gradient subsequently used for ATP formation. This Brachypodium distachyon (Purple false brome) protein is Photosystem II CP43 reaction center protein.